A 95-amino-acid polypeptide reads, in one-letter code: IgNAR transmembrane form NE (95 aa).

The Ig-like domain occupies 1 to 36 (LTFSTRSLLNLPAVEWKSGAKYTCTASHSPSQSTVK). Polar residues predominate over residues 24 to 35 (CTASHSPSQSTV). The segment at 24–79 (CTASHSPSQSTVKRVIRNPKESPKGSSETRKSPLEIMESPEDYGTEEDQLENVNED) is disordered. Basic and acidic residues predominate over residues 41–56 (NPKESPKGSSETRKSP). The segment covering 61–77 (ESPEDYGTEEDQLENVN) has biased composition (acidic residues). The N-linked (GlcNAc...) asparagine glycan is linked to Asn-81.

In terms of tissue distribution, expressed mainly in lymphoid tissues including spleen, epigonal organ and circulating lymphocytes. Also expressed at low levels in the pancreas.

The protein is IgNAR transmembrane form NE of Ginglymostoma cirratum (Nurse shark).